The primary structure comprises 264 residues: Probable glycerophosphodiester phosphodiesterase 2 (264 aa).

The 239-residue stretch at 17 to 255 (RIAMAHRGFT…DRADLLRDVL (239 aa)) folds into the GP-PDE domain. Catalysis depends on H22, which acts as the Proton acceptor. E50, D52, and H65 together coordinate a divalent metal cation. H65 serves as the catalytic Proton donor.

It belongs to the glycerophosphoryl diester phosphodiesterase family. The cofactor is a divalent metal cation.

It catalyses the reaction a sn-glycero-3-phosphodiester + H2O = an alcohol + sn-glycerol 3-phosphate + H(+). Functionally, glycerophosphodiester phosphodiesterase hydrolyzes glycerophosphodiesters into glycerol-3-phosphate (G3P) and the corresponding alcohol. This chain is Probable glycerophosphodiester phosphodiesterase 2, found in Mycobacterium tuberculosis (strain ATCC 25618 / H37Rv).